The following is a 507-amino-acid chain: Beta-glucosidase 13 (507 aa).

Positions 1–22 (MRTKYFSLLVFIIVLASNEVIA) are cleaved as a signal peptide. Gln-50 provides a ligand contact to a beta-D-glucoside. A glycan (N-linked (GlcNAc...) asparagine) is linked at Asn-81. Residues His-154 and 199–200 (NE) each bind a beta-D-glucoside. Catalysis depends on Glu-200, which acts as the Proton donor. Cys-219 and Cys-227 are disulfide-bonded. Asn-226 is a glycosylation site (N-linked (GlcNAc...) asparagine). An a beta-D-glucoside-binding site is contributed by Tyr-344. Asn-358 carries an N-linked (GlcNAc...) asparagine glycan. A beta-D-glucoside contacts are provided by residues Glu-414, Trp-459, 466-467 (EW), and Phe-475. Glu-414 functions as the Nucleophile in the catalytic mechanism.

Belongs to the glycosyl hydrolase 1 family.

It carries out the reaction Hydrolysis of terminal, non-reducing beta-D-glucosyl residues with release of beta-D-glucose.. This is Beta-glucosidase 13 from Arabidopsis thaliana (Mouse-ear cress).